The following is a 192-amino-acid chain: Elongation factor P (192 aa).

It belongs to the elongation factor P family.

It localises to the cytoplasm. It participates in protein biosynthesis; polypeptide chain elongation. Involved in peptide bond synthesis. Stimulates efficient translation and peptide-bond synthesis on native or reconstituted 70S ribosomes in vitro. Probably functions indirectly by altering the affinity of the ribosome for aminoacyl-tRNA, thus increasing their reactivity as acceptors for peptidyl transferase. The chain is Elongation factor P (efp) from Aquifex aeolicus (strain VF5).